Here is a 502-residue protein sequence, read N- to C-terminus: uncharacterized protein (502 aa).

2 helical membrane-spanning segments follow: residues 10–30 (NLTL…IXIF) and 473–493 (FSLI…FGLV).

It is found in the cell membrane. This is an uncharacterized protein from Borreliella burgdorferi (strain ATCC 35210 / DSM 4680 / CIP 102532 / B31) (Borrelia burgdorferi).